Consider the following 1132-residue polypeptide: Myosin-binding protein C, fast-type (1132 aa).

The segment at 1–59 (MPEPSKAAPKKEAKKKEEKKEEKKEAPPPQEHKDEAPDDVHPPETPDPEGLFLSKPQNV) is disordered. Positions 9–44 (PKKEAKKKEEKKEEKKEAPPPQEHKDEAPDDVHPPE) are enriched in basic and acidic residues. 5 consecutive Ig-like C2-type domains span residues 48–149 (PEGL…SIDV), 249–338 (SEAF…VKEP), 339–429 (PVTV…VEEK), 430–530 (QLEV…KQEP), and 531–630 (PKIH…VVDV). Fibronectin type-III domains follow at residues 633–729 (PPQS…IAPT) and 731–826 (EPTH…IREI). Residues 830–923 (PKIRLPRHLR…ATLRLRVVER (94 aa)) enclose the Ig-like C2-type 6 domain. The region spanning 926–1022 (PPQAVRVMEV…HNTARIAKEG (97 aa)) is the Fibronectin type-III 3 domain. Positions 1039-1132 (PQFLTPLVDR…ECRLDVRVPQ (94 aa)) constitute an Ig-like C2-type 7 domain.

This sequence belongs to the immunoglobulin superfamily. MyBP family.

Its function is as follows. Thick filament-associated protein located in the crossbridge region of vertebrate striated muscle a bands. In vitro it binds MHC, F-actin and native thin filaments, and modifies the activity of actin-activated myosin ATPase. It may modulate muscle contraction or may play a more structural role. The sequence is that of Myosin-binding protein C, fast-type (MYBPC2) from Gallus gallus (Chicken).